The chain runs to 194 residues: Imidazoleglycerol-phosphate dehydratase (194 aa).

It belongs to the imidazoleglycerol-phosphate dehydratase family.

It localises to the cytoplasm. It carries out the reaction D-erythro-1-(imidazol-4-yl)glycerol 3-phosphate = 3-(imidazol-4-yl)-2-oxopropyl phosphate + H2O. Its pathway is amino-acid biosynthesis; L-histidine biosynthesis; L-histidine from 5-phospho-alpha-D-ribose 1-diphosphate: step 6/9. The chain is Imidazoleglycerol-phosphate dehydratase from Thermus thermophilus (strain ATCC 27634 / DSM 579 / HB8).